Here is a 715-residue protein sequence, read N- to C-terminus: Serrate RNA effector molecule homolog (715 aa).

Disordered stretches follow at residues 1–87, 223–259, and 629–715; these read MDSD…YSGP, ENKD…TDKA, and EPKH…DDIP. Composition is skewed to basic and acidic residues over residues 7–25, 37–57, and 223–242; these read GDRR…DSYR, YDNK…SRGD, and ENKD…VKEE. Residues 243 to 256 are compositionally biased toward acidic residues; that stretch reads PNEEQEEGAIDDET. A compositionally biased stretch (basic and acidic residues) spans 629–659; that stretch reads EPKHMPHMSRDDHRGGGGDRGYGRERDDDRG.

The protein belongs to the ARS2 family.

It is found in the nucleus. Acts as a mediator between the cap-binding complex (CBC) and the primary microRNAs (miRNAs) processing machinery. Contributes to the stability and delivery of capped primary miRNA transcripts to the primary miRNA processing complex, thereby playing a role in RNA-mediated gene silencing (RNAi) by miRNAs. This Caenorhabditis briggsae protein is Serrate RNA effector molecule homolog.